A 474-amino-acid chain; its full sequence is Glutathione synthetase (474 aa).

At alanine 2 the chain carries N-acetylalanine. Arginine 125 lines the substrate pocket. An ATP-binding site is contributed by glutamate 144. Mg(2+)-binding residues include glutamate 144 and asparagine 146. Residues 148–151 (ISAS), 214–216 (ERN), glutamine 220, and 267–270 (RDGY) each bind substrate. Residues lysine 305, 364-373 (KPQREGGGNN), tyrosine 375, and 398-401 (MEKI) contribute to the ATP site. Glutamate 368 lines the Mg(2+) pocket. Phosphoserine is present on serine 415. Glutamate 425 is a binding site for ATP. A substrate-binding site is contributed by arginine 450. ATP-binding residues include lysine 452 and aspartate 458. Residue 461 to 462 (VA) participates in substrate binding.

This sequence belongs to the eukaryotic GSH synthase family. As to quaternary structure, homodimer. It depends on Mg(2+) as a cofactor.

It carries out the reaction gamma-L-glutamyl-L-cysteine + glycine + ATP = glutathione + ADP + phosphate + H(+). It catalyses the reaction gamma-L-glutamyl-(2S)-2-aminobutanoate + glycine + ATP = ophthalmate + ADP + phosphate + H(+). It functions in the pathway sulfur metabolism; glutathione biosynthesis; glutathione from L-cysteine and L-glutamate: step 2/2. Its function is as follows. Catalyzes the production of glutathione from gamma-glutamylcysteine and glycine in an ATP-dependent manner. Glutathione (gamma-glutamylcysteinylglycine, GSH) is the most abundant intracellular thiol in living aerobic cells and is required for numerous processes including the protection of cells against oxidative damage, amino acid transport, the detoxification of foreign compounds, the maintenance of protein sulfhydryl groups in a reduced state and acts as a cofactor for a number of enzymes. Participates in ophthalmate biosynthesis in hepatocytes. This chain is Glutathione synthetase, found in Rattus norvegicus (Rat).